The following is a 444-amino-acid chain: Tubulin beta chain (444 aa).

GTP-binding residues include Gln-11, Glu-69, Ser-138, Gly-142, Thr-143, Gly-144, Asn-204, and Asn-226. Residue Glu-69 participates in Mg(2+) binding.

It belongs to the tubulin family. As to quaternary structure, dimer of alpha and beta chains. A typical microtubule is a hollow water-filled tube with an outer diameter of 25 nm and an inner diameter of 15 nM. Alpha-beta heterodimers associate head-to-tail to form protofilaments running lengthwise along the microtubule wall with the beta-tubulin subunit facing the microtubule plus end conferring a structural polarity. Microtubules usually have 13 protofilaments but different protofilament numbers can be found in some organisms and specialized cells. Mg(2+) is required as a cofactor.

It localises to the cytoplasm. Its subcellular location is the cytoskeleton. Its function is as follows. Tubulin is the major constituent of microtubules, a cylinder consisting of laterally associated linear protofilaments composed of alpha- and beta-tubulin heterodimers. Microtubules grow by the addition of GTP-tubulin dimers to the microtubule end, where a stabilizing cap forms. Below the cap, tubulin dimers are in GDP-bound state, owing to GTPase activity of alpha-tubulin. The protein is Tubulin beta chain (TBB) of Onchocerca gibsoni.